Consider the following 228-residue polypeptide: MKKAVVLLSGGMDSATTLAIARQSGFACYALSIDYGQRHVAELAAAARIGQSLQVSDHQFLKLDLAVLASSVLTDISATVPLHGTSTGIPVTYVPARNTIMLALALAWAEVLGSHDIFIGVTAVDYSGYPDCRRDYIDAFEKMANLATKAGREGMVLTVHAPLIDLPKREIIQCGMELGIDYGLTVSCYQADEAGYACGQCDACHIRRAGFEAADIPDPTCYRNKQIS.

An ATP-binding site is contributed by 8–18 (LSGGMDSATTL). Zn(2+) contacts are provided by C188, C198, C201, and C204.

The protein belongs to the QueC family. Requires Zn(2+) as cofactor.

It catalyses the reaction 7-carboxy-7-deazaguanine + NH4(+) + ATP = 7-cyano-7-deazaguanine + ADP + phosphate + H2O + H(+). It participates in purine metabolism; 7-cyano-7-deazaguanine biosynthesis. Its function is as follows. Catalyzes the ATP-dependent conversion of 7-carboxy-7-deazaguanine (CDG) to 7-cyano-7-deazaguanine (preQ(0)). This Nitrosomonas europaea (strain ATCC 19718 / CIP 103999 / KCTC 2705 / NBRC 14298) protein is 7-cyano-7-deazaguanine synthase.